Reading from the N-terminus, the 713-residue chain is Low-density lipoprotein receptor-related protein 10 (713 aa).

The signal sequence occupies residues 1-17 (MLSALPLLFLLLGGALA). The Extracellular segment spans residues 18-441 (RPDRITFPRS…WDCSYALPRK (424 aa)). Disulfide bonds link Cys29–Cys58 and Cys81–Cys99. Positions 29–137 (CEAPPAVLSE…QGFLLTYSQD (109 aa)) constitute a CUB 1 domain. Residue Asn57 is glycosylated (N-linked (GlcNAc...) asparagine). N-linked (GlcNAc...) asparagine glycosylation is present at Asn112. An LDL-receptor class A 1 domain is found at 140-176 (LCLQEEFQCLNHRCIPAAQRCDGIDACGDGSDEAGCS). Intrachain disulfides connect Cys141–Cys153, Cys148–Cys166, Cys160–Cys175, and Cys193–Cys221. The 114-residue stretch at 193–306 (CNLTLEDFYG…RGFNATYHVR (114 aa)) folds into the CUB 2 domain. 2 N-linked (GlcNAc...) asparagine glycosylation sites follow: Asn194 and Asn300. 3 consecutive LDL-receptor class A domains span residues 308–355 (YCLP…EGCP), 356–398 (GCPP…RRCR), and 399–435 (HCQPGNFRCRDEKCVYETWVCDGQPDCTDGSDEWDCS). Disulfide bonds link Cys309/Cys332, Cys316/Cys345, Cys339/Cys354, Cys357/Cys375, Cys364/Cys388, Cys382/Cys397, Cys400/Cys412, Cys407/Cys425, and Cys419/Cys434. A helical transmembrane segment spans residues 442–462 (VITAAVIGSLVCGLLLVIALG). Residues 463-713 (CTCKLYAIRT…VEAEDEPLLA (251 aa)) are Cytoplasmic-facing. Positions 566–636 (LLPRTNTPAR…TLPALATVSE (71 aa)) are disordered. A Phosphothreonine modification is found at Thr596. Residues 614-626 (PPLPIKTPIPTPS) show a composition bias toward pro residues.

Belongs to the LDLR family. Highly expressed in heart, lung, liver and liver. Expressed at low level in brain and spleen. Weakly or not expressed in testis and skeletal muscle. In liver, it is expressed in hepatocytes and at higher level in sinusoidal lining. In the kidney, it is expressed in peritubular capillaries. In brain, it is expressed in the epithelium of the choroid plexus ependymal cells of the third ventricle pia matter, and to lesser extent in hippocampal fields CA2 and CA3.

It localises to the membrane. It is found in the coated pit. Probable receptor, which is involved in the internalization of lipophilic molecules and/or signal transduction. May be involved in the uptake of lipoprotein APOE in liver. The protein is Low-density lipoprotein receptor-related protein 10 (Lrp10) of Mus musculus (Mouse).